Consider the following 853-residue polypeptide: Putative dipeptidyl aminopeptidase C14C4.15c (853 aa).

The segment at 1–26 is disordered; it reads MNAYEGDTLNNHGKSSTRQHWRKRSA. The Cytoplasmic portion of the chain corresponds to 1-65; that stretch reads MNAYEGDTLN…AKKRRRKKHR (65 aa). Positions 15–25 are enriched in basic residues; the sequence is SSTRQHWRKRS. Residues 66–86 form a helical; Signal-anchor for type II membrane protein membrane-spanning segment; that stretch reads YIYLAVCLFFLASVLSCAIIF. Topologically, residues 87–853 are lumenal; it reads RFYLHTNREN…SGHFHHALYC (767 aa). Residues Asn-96, Asn-102, Asn-472, Asn-483, and Asn-613 are each glycosylated (N-linked (GlcNAc...) asparagine). Residues Ser-719, Asp-795, and His-828 each act as charge relay system in the active site.

This sequence belongs to the peptidase S9B family.

Its subcellular location is the vacuole membrane. The sequence is that of Putative dipeptidyl aminopeptidase C14C4.15c from Schizosaccharomyces pombe (strain 972 / ATCC 24843) (Fission yeast).